The sequence spans 496 residues: Cobyric acid synthase (496 aa).

The GATase cobBQ-type domain occupies 256–444 (KINIAVVLLR…IHGILDNQAF (189 aa)). Cysteine 337 acts as the Nucleophile in catalysis. Histidine 436 is an active-site residue.

It belongs to the CobB/CobQ family. CobQ subfamily.

The protein operates within cofactor biosynthesis; adenosylcobalamin biosynthesis. In terms of biological role, catalyzes amidations at positions B, D, E, and G on adenosylcobyrinic A,C-diamide. NH(2) groups are provided by glutamine, and one molecule of ATP is hydrogenolyzed for each amidation. In Phocaeicola vulgatus (strain ATCC 8482 / DSM 1447 / JCM 5826 / CCUG 4940 / NBRC 14291 / NCTC 11154) (Bacteroides vulgatus), this protein is Cobyric acid synthase.